We begin with the raw amino-acid sequence, 481 residues long: 7-deoxyloganetin glucosyltransferase (481 aa).

Histidine 22 functions as the Proton acceptor in the catalytic mechanism. Histidine 22 serves as a coordination point for an anthocyanidin. The Charge relay role is filled by aspartate 126. The UDP-alpha-D-glucose site is built by threonine 148, glutamine 363, histidine 378, tryptophan 381, asparagine 382, serine 383, and glutamate 386. Alanine 401 provides a ligand contact to an anthocyanidin. Residues glutamate 402 and glutamine 403 each coordinate UDP-alpha-D-glucose.

It belongs to the UDP-glycosyltransferase family. In terms of tissue distribution, ubiquitous. Very low expression in stems.

The catalysed reaction is 7-deoxyloganetin + UDP-alpha-D-glucose = 7-deoxyloganin + UDP + H(+). In terms of biological role, iridoid glucosyltransferase acting on genipin and 7-deoxyloganetin. No activity with 7-deoxyloganetic acid. Involved in geniposide biosynthesis. The sequence is that of 7-deoxyloganetin glucosyltransferase (UGT85A24) from Gardenia jasminoides (Cape jasmine).